The chain runs to 491 residues: Protein DETOXIFICATION 28 (491 aa).

Helical transmembrane passes span 47-67 (IVGPAIFTRVTTNLIFVITQA), 77-97 (LAAISIVNNVIIGFNYSLFIG), 127-147 (IVLFLFSILLLPMYIFATPIL), 160-180 (SGIISVWAIPTHFSFAFFFPI), 192-212 (VIAISSGVSLVVHIFVCWLFV), 228-248 (VSWWLNVFILFTYTTCGGCPL), 272-292 (GIMVCLENWYYRMLIVMTGNL), 302-322 (MSICMSINGLEMMVPLAFFAG), 352-372 (IIGIIISVLIYFLLDQIGWMF), 387-407 (ILLSFAILLNSVQPVLSGVAV), 414-434 (LVAFINLGCYYFIGLPLGIVM), and 444-464 (GIWAGMIFGGTMVQTLILIFI).

The protein belongs to the multi antimicrobial extrusion (MATE) (TC 2.A.66.1) family.

Its subcellular location is the membrane. The sequence is that of Protein DETOXIFICATION 28 from Arabidopsis thaliana (Mouse-ear cress).